Here is a 201-residue protein sequence, read N- to C-terminus: tRNA (guanine-N(7)-)-methyltransferase (201 aa).

4 residues coordinate S-adenosyl-L-methionine: Glu33, Glu58, Asp85, and Asp106. Asp106 is an active-site residue. Residues Lys110, Asp142, and 180 to 183 contribute to the substrate site; that span reads TTYE.

The protein belongs to the class I-like SAM-binding methyltransferase superfamily. TrmB family.

The catalysed reaction is guanosine(46) in tRNA + S-adenosyl-L-methionine = N(7)-methylguanosine(46) in tRNA + S-adenosyl-L-homocysteine. The protein operates within tRNA modification; N(7)-methylguanine-tRNA biosynthesis. Catalyzes the formation of N(7)-methylguanine at position 46 (m7G46) in tRNA. The polypeptide is tRNA (guanine-N(7)-)-methyltransferase (Mesomycoplasma hyopneumoniae (strain 7448) (Mycoplasma hyopneumoniae)).